A 276-amino-acid chain; its full sequence is Undecaprenyl-diphosphatase 1 (276 aa).

Transmembrane regions (helical) follow at residues Phe83 to Lys103, Val108 to Trp128, Val187 to Glu207, Val217 to Cys237, and Val252 to Trp272.

Belongs to the UppP family.

Its subcellular location is the cell inner membrane. The catalysed reaction is di-trans,octa-cis-undecaprenyl diphosphate + H2O = di-trans,octa-cis-undecaprenyl phosphate + phosphate + H(+). Functionally, catalyzes the dephosphorylation of undecaprenyl diphosphate (UPP). Confers resistance to bacitracin. In Burkholderia cenocepacia (strain HI2424), this protein is Undecaprenyl-diphosphatase 1.